A 233-amino-acid polypeptide reads, in one-letter code: Probable transglycosylase IsaA (233 aa).

The N-terminal stretch at 1-29 is a signal peptide; it reads MKKTIMASSLAVALGVTGYAAGTGHQAHA.

The protein belongs to the transglycosylase family. IsaA subfamily.

It localises to the secreted. Its function is as follows. Is able to cleave peptidoglycan. The sequence is that of Probable transglycosylase IsaA (isaA) from Staphylococcus aureus (strain Mu3 / ATCC 700698).